The sequence spans 510 residues: NAD(P)H-quinone oxidoreductase subunit 2 B, chloroplastic (510 aa).

A run of 13 helical transmembrane segments spans residues 24-44 (LLLFHGSFIFPECILIFGLIL), 57-77 (IPWLYFISSTSLVISITALLF), 99-119 (IFQFLILLCSTLCIPLSVEYI), 124-144 (MAITEFLLFVLTATLGGMFLC), 149-169 (LITIFVAPECFSLCSYLLSGY), 183-203 (YLLMGGASSSILVHGFSWLYG), 227-247 (PGISIALIFITVGIGFKLSPA), 295-315 (WHLHLEILAILSMILGNLIAI), 323-343 (MLAYSSIGQIGYVIIGIIVGD), 347-367 (GYASMITYMLFYISMNLGTFA), 395-415 (ALSLALCLLSLGGLPPLAGFF), 418-438 (LHLFWCGWQAGLYFLVSIGLL), and 484-504 (MIVCVIASTIPGISMNPIIAI).

This sequence belongs to the complex I subunit 2 family. NDH is composed of at least 16 different subunits, 5 of which are encoded in the nucleus.

It localises to the plastid. It is found in the chloroplast thylakoid membrane. It carries out the reaction a plastoquinone + NADH + (n+1) H(+)(in) = a plastoquinol + NAD(+) + n H(+)(out). The enzyme catalyses a plastoquinone + NADPH + (n+1) H(+)(in) = a plastoquinol + NADP(+) + n H(+)(out). In terms of biological role, NDH shuttles electrons from NAD(P)H:plastoquinone, via FMN and iron-sulfur (Fe-S) centers, to quinones in the photosynthetic chain and possibly in a chloroplast respiratory chain. The immediate electron acceptor for the enzyme in this species is believed to be plastoquinone. Couples the redox reaction to proton translocation, and thus conserves the redox energy in a proton gradient. The sequence is that of NAD(P)H-quinone oxidoreductase subunit 2 B, chloroplastic from Buxus microphylla (Littleleaf boxwood).